Here is a 378-residue protein sequence, read N- to C-terminus: Rhodopsin (378 aa).

Over M1–W53 the chain is Extracellular. N-linked (GlcNAc...) asparagine glycosylation occurs at N24. The chain crosses the membrane as a helical span at residues H54–I78. The Cytoplasmic portion of the chain corresponds to F79–N90. A helical membrane pass occupies residues L91–C115. The Extracellular segment spans residues Y116 to Y130. Residues C127 and C204 are joined by a disulfide bond. The helical transmembrane segment at G131–F150 threads the bilayer. Topologically, residues D151–G169 are cytoplasmic. The chain crosses the membrane as a helical span at residues A170–N193. Residues R194 to S217 are Extracellular-facing. A glycan (N-linked (GlcNAc...) asparagine) is linked at N200. The chain crosses the membrane as a helical span at residues Y218–V245. Residues A246–K280 lie on the Cytoplasmic side of the membrane. A helical membrane pass occupies residues V281–I304. The Extracellular segment spans residues F305–N311. Residues P312–S336 traverse the membrane as a helical segment. At K323 the chain carries N6-(retinylidene)lysine. Over H337–A378 the chain is Cytoplasmic. Residues G356–A378 are disordered. Positions T362–E371 are enriched in low complexity.

The protein belongs to the G-protein coupled receptor 1 family. Opsin subfamily. In terms of processing, phosphorylated on some or all of the serine and threonine residues present in the C-terminal region.

It is found in the membrane. Functionally, visual pigments are the light-absorbing molecules that mediate vision. They consist of an apoprotein, opsin, covalently linked to cis-retinal. The protein is Rhodopsin of Cataglyphis bombycina (Saharan silver ant).